We begin with the raw amino-acid sequence, 232 residues long: Ubiquinone biosynthesis O-methyltransferase (232 aa).

Residues Arg36, Gly55, Asp76, and Met120 each contribute to the S-adenosyl-L-methionine site.

Belongs to the methyltransferase superfamily. UbiG/COQ3 family.

It carries out the reaction a 3-demethylubiquinol + S-adenosyl-L-methionine = a ubiquinol + S-adenosyl-L-homocysteine + H(+). The catalysed reaction is a 3-(all-trans-polyprenyl)benzene-1,2-diol + S-adenosyl-L-methionine = a 2-methoxy-6-(all-trans-polyprenyl)phenol + S-adenosyl-L-homocysteine + H(+). Its pathway is cofactor biosynthesis; ubiquinone biosynthesis. Functionally, O-methyltransferase that catalyzes the 2 O-methylation steps in the ubiquinone biosynthetic pathway. The polypeptide is Ubiquinone biosynthesis O-methyltransferase (Paraburkholderia phymatum (strain DSM 17167 / CIP 108236 / LMG 21445 / STM815) (Burkholderia phymatum)).